The following is a 159-amino-acid chain: Crossover junction endodeoxyribonuclease RuvC (159 aa).

Active-site residues include Asp-7, Glu-66, and Asp-139. Asp-7, Glu-66, and Asp-139 together coordinate Mg(2+).

The protein belongs to the RuvC family. As to quaternary structure, homodimer which binds Holliday junction (HJ) DNA. The HJ becomes 2-fold symmetrical on binding to RuvC with unstacked arms; it has a different conformation from HJ DNA in complex with RuvA. In the full resolvosome a probable DNA-RuvA(4)-RuvB(12)-RuvC(2) complex forms which resolves the HJ. Mg(2+) serves as cofactor.

The protein resides in the cytoplasm. It carries out the reaction Endonucleolytic cleavage at a junction such as a reciprocal single-stranded crossover between two homologous DNA duplexes (Holliday junction).. In terms of biological role, the RuvA-RuvB-RuvC complex processes Holliday junction (HJ) DNA during genetic recombination and DNA repair. Endonuclease that resolves HJ intermediates. Cleaves cruciform DNA by making single-stranded nicks across the HJ at symmetrical positions within the homologous arms, yielding a 5'-phosphate and a 3'-hydroxyl group; requires a central core of homology in the junction. The consensus cleavage sequence is 5'-(A/T)TT(C/G)-3'. Cleavage occurs on the 3'-side of the TT dinucleotide at the point of strand exchange. HJ branch migration catalyzed by RuvA-RuvB allows RuvC to scan DNA until it finds its consensus sequence, where it cleaves and resolves the cruciform DNA. This is Crossover junction endodeoxyribonuclease RuvC from Sulfurovum sp. (strain NBC37-1).